A 525-amino-acid chain; its full sequence is ATP synthase subunit beta, mitochondrial (525 aa).

The N-terminal 44 residues, 1 to 44, are a transit peptide targeting the mitochondrion; sequence MLKKQALSGIRRFSLATKQSFVKTSYKLPRKSWLNTAKFNTIRY. Residue 203 to 210 participates in ATP binding; that stretch reads GGAGVGKT.

This sequence belongs to the ATPase alpha/beta chains family. As to quaternary structure, F-type ATPases have 2 components, CF(1) - the catalytic core - and CF(0) - the membrane proton channel. CF(1) has five subunits: alpha(3), beta(3), gamma(1), delta(1), epsilon(1). CF(0) has three main subunits: a, b and c.

Its subcellular location is the mitochondrion. It localises to the mitochondrion inner membrane. It carries out the reaction ATP + H2O + 4 H(+)(in) = ADP + phosphate + 5 H(+)(out). Its function is as follows. Mitochondrial membrane ATP synthase (F(1)F(0) ATP synthase or Complex V) produces ATP from ADP in the presence of a proton gradient across the membrane which is generated by electron transport complexes of the respiratory chain. F-type ATPases consist of two structural domains, F(1) - containing the extramembraneous catalytic core, and F(0) - containing the membrane proton channel, linked together by a central stalk and a peripheral stalk. During catalysis, ATP synthesis in the catalytic domain of F(1) is coupled via a rotary mechanism of the central stalk subunits to proton translocation. Subunits alpha and beta form the catalytic core in F(1). Rotation of the central stalk against the surrounding alpha(3)beta(3) subunits leads to hydrolysis of ATP in three separate catalytic sites on the beta subunits. The chain is ATP synthase subunit beta, mitochondrial (atp2) from Schizosaccharomyces pombe (strain 972 / ATCC 24843) (Fission yeast).